The sequence spans 141 residues: HTH-type transcriptional repressor NsrR (141 aa).

An HTH rrf2-type domain is found at 2–129; sequence QLTSFTDYGL…DNYTLADLVE (128 aa). A DNA-binding region (H-T-H motif) is located at residues 28 to 51; it reads ISEVTDVYGVSRNHMVKIINQLSR. [2Fe-2S] cluster-binding residues include Cys91, Cys96, and Cys102.

[2Fe-2S] cluster is required as a cofactor.

Functionally, nitric oxide-sensitive repressor of genes involved in protecting the cell against nitrosative stress. May require iron for activity. The polypeptide is HTH-type transcriptional repressor NsrR (Escherichia coli O157:H7 (strain EC4115 / EHEC)).